The primary structure comprises 562 residues: Serine palmitoyltransferase 2 (562 aa).

The helical transmembrane segment at 67–87 threads the bilayer; the sequence is PMLVAVLTYVGYGVLTLFGYL. K379 is modified (N6-(pyridoxal phosphate)lysine).

It belongs to the class-II pyridoxal-phosphate-dependent aminotransferase family. As to quaternary structure, component of the serine palmitoyltransferase (SPT) complex, which is composed of SPTLC1, SPTLC2 or SPTLC3 and SPTSSA or SPTSSB. The heterodimer consisting of SPTLC1 and SPTLC2/SPTLC3 forms the catalytic core of the enzyme, while SPTSSA or SPTSSB subunits determine substrate specificity. SPT also interacts with ORMDL proteins, especially ORMDL3, which negatively regulate SPT activity in the presence of ceramides. Forms dimers of heterodimers with SPTLC1. Pyridoxal 5'-phosphate serves as cofactor. In terms of tissue distribution, widely expressed.

It localises to the endoplasmic reticulum membrane. It carries out the reaction L-serine + hexadecanoyl-CoA + H(+) = 3-oxosphinganine + CO2 + CoA. The catalysed reaction is octadecanoyl-CoA + L-serine + H(+) = 3-oxoeicosasphinganine + CO2 + CoA. The protein operates within lipid metabolism; sphingolipid metabolism. With respect to regulation, SPT complex catalytic activity is negatively regulated by ORMDL proteins, including ORMDL3, in the presence of ceramides. This mechanism allows to maintain ceramide levels at sufficient concentrations for the production of complex sphingolipids, but which prevents the accumulation of ceramides to levels that trigger apoptosis. Its function is as follows. Component of the serine palmitoyltransferase multisubunit enzyme (SPT) that catalyzes the initial and rate-limiting step in sphingolipid biosynthesis by condensing L-serine and activated acyl-CoA (most commonly palmitoyl-CoA) to form long-chain bases. The SPT complex is composed of SPTLC1, SPTLC2 or SPTLC3 and SPTSSA or SPTSSB. Within this complex, the heterodimer consisting of SPTLC1 and SPTLC2/SPTLC3 forms the catalytic core. The composition of the serine palmitoyltransferase (SPT) complex determines the substrate preference. The SPTLC1-SPTLC2-SPTSSA complex shows a strong preference for C16-CoA substrate, while the SPTLC1-SPTLC3-SPTSSA isozyme uses both C14-CoA and C16-CoA as substrates, with a slight preference for C14-CoA. The SPTLC1-SPTLC2-SPTSSB complex shows a strong preference for C18-CoA substrate, while the SPTLC1-SPTLC3-SPTSSB isozyme displays an ability to use a broader range of acyl-CoAs, without apparent preference. Crucial for adipogenesis. The protein is Serine palmitoyltransferase 2 of Homo sapiens (Human).